A 348-amino-acid polypeptide reads, in one-letter code: tRNA N6-adenosine threonylcarbamoyltransferase (348 aa).

Fe cation is bound by residues His-116 and His-120. Substrate is bound by residues 138-142 (IISGG), Asp-171, Gly-184, and Asn-282. Asp-310 is a binding site for Fe cation.

The protein belongs to the KAE1 / TsaD family. Fe(2+) is required as a cofactor.

The protein localises to the cytoplasm. It carries out the reaction L-threonylcarbamoyladenylate + adenosine(37) in tRNA = N(6)-L-threonylcarbamoyladenosine(37) in tRNA + AMP + H(+). Required for the formation of a threonylcarbamoyl group on adenosine at position 37 (t(6)A37) in tRNAs that read codons beginning with adenine. Is involved in the transfer of the threonylcarbamoyl moiety of threonylcarbamoyl-AMP (TC-AMP) to the N6 group of A37, together with TsaE and TsaB. TsaD likely plays a direct catalytic role in this reaction. The polypeptide is tRNA N6-adenosine threonylcarbamoyltransferase (Ehrlichia ruminantium (strain Welgevonden)).